We begin with the raw amino-acid sequence, 145 residues long: Large ribosomal subunit protein uL16 (145 aa).

The protein belongs to the universal ribosomal protein uL16 family. As to quaternary structure, part of the 50S ribosomal subunit.

Functionally, binds 23S rRNA and is also seen to make contacts with the A and possibly P site tRNAs. In Lactobacillus johnsonii (strain CNCM I-12250 / La1 / NCC 533), this protein is Large ribosomal subunit protein uL16.